The primary structure comprises 94 residues: Scorpine (94 aa).

The signal sequence occupies residues 1–19 (MNSKLTALIFLGLIAIAYC). One can recognise a BetaSPN-type CS-alpha/beta domain in the interval 55–94 (EFQCMANMDMLGNCEKHCQTSGEKGYCHGTKCKCGTPLSY). 3 disulfide bridges follow: Cys58/Cys81, Cys68/Cys86, and Cys72/Cys88.

Belongs to the long chain scorpion toxin family. Class 3 subfamily. Expressed by the venom gland.

It localises to the secreted. It is found in the target cell membrane. This full-length protein shows antibacterial activity against B.subtilis and K.pneumoniae. Also shows a potent inhibitory effect on the ookinete (ED(50) 0.7 uM) and gamete (ED(50) 10 uM) stages of Plasmodium berghei development. In addition, induces cell membrane disruption, leakage currents and cell death on HEK293 cell line (tested at 25 uM). The chain is Scorpine from Pandinus imperator (Emperor scorpion).